The chain runs to 396 residues: Phosphoglycerate kinase (396 aa).

Substrate is bound by residues 21 to 23 (DFN), R36, 59 to 62 (HLGK), R119, and R156. ATP is bound by residues K206, G294, E325, and 352–355 (GGDS).

This sequence belongs to the phosphoglycerate kinase family. Monomer.

It localises to the cytoplasm. The catalysed reaction is (2R)-3-phosphoglycerate + ATP = (2R)-3-phospho-glyceroyl phosphate + ADP. It participates in carbohydrate degradation; glycolysis; pyruvate from D-glyceraldehyde 3-phosphate: step 2/5. The polypeptide is Phosphoglycerate kinase (Staphylococcus aureus (strain bovine RF122 / ET3-1)).